The primary structure comprises 224 residues: Inhibitor of apoptosis protein (224 aa).

A BIR repeat occupies 29–92; sequence VDARNQSFAI…GFWSRNCGFM (64 aa). Residues cysteine 62, cysteine 65, histidine 82, and cysteine 89 each contribute to the Zn(2+) site. Residues 189–207 form a C4-type zinc finger; sequence CMTCGIEPIKKDENFCNAC.

Belongs to the asfivirus IAP family. In terms of assembly, interacts with subunit p17 of host CASP3.

The protein resides in the host cytoplasm. It localises to the virion. Prevent apoptosis of host cell by inhibiting caspase-3/CASP3 activation to promote the viral replication. Also induces the activation of host NF-kappaB. The protein is Inhibitor of apoptosis protein of Ornithodoros (relapsing fever ticks).